We begin with the raw amino-acid sequence, 1428 residues long: MENEPDHENVEQSLCAKTSEEELNKSFNLEASLSKFSYIDMDKELEFKNDLIDDKEFDIPQVDTPPTLESILNETDDEDESFILEDPTLLNIDTIDSHSYDTSSVASSDSGDRTNLKRKKKLPDSFSLHGSVMRHSLLKGISAQIVSAADKVDAGLPTAIAVSSLIAVGTSHGLALIFGKDQNQALRLCLGSTSVGGQYGAISALSINNDCSRLLCGFAKGQITMWDLASGKLLRSITDAHPPGTAILHIKFTDDPTLAICNDSGGSVFELTFKRVMGVRTCESRCLFSGSKGEVCCIEPLHSKPELKDHPITQFSLLAMASLTKILVIGLKPSLKVWMTFPYGRMDPSSVPLLAWHFVAVQNYVNPMLAFCRGDVVHFLLVKRDESGAIHVTKQKHLHLYYDLINFTWINSRTVVLLDSVEKLHVIDRQTQEELETVEISEVQLVYNSSHFKSLATGGNVSQALALVGEKACYQSISSYGGQIFYLGTKSVYVMMLRSWRERVDHLLKQDCLTEALALAWSFHEGKAKAVVGLSGDASKRKAIVADRMVEILFHYADRALKKCPDQGKIQVMEQHFQDMVPVIVDYCLLLQRKDLLFSQMYDKLSENSVAKGVFLECLEPYILSDKLVGITPQVMKDLIVHFQDKKLMENVEALIVHMDITSLDIQQVVLMCWENRLYDAMIYVYNRGMNEFISPMEKLFRVIAPPLNAGKTLTDEQVVMGNKLLVYISCCLAGRAYPLGDIPEDLVPLVKNQVFEFLIRLHSAEASPEEEIYPYIRTLLHFDTREFLNVLALTFEDFKNDKQAVEYQQRIVDILLKVMVENSDFTPSQVGCLFTFLARQLAKPDNTLFVNRTLFDQVLEFLCSPDDDSRHSERQQVLLELLQAGGIVQFEESRLIRMAEKAEFYQICEFMYEREHQYDKIIDCYLRDPLREEEVFNYIHNILSIPGHSAEEKQSVWQKAMDHIEELVSLKPCKAAELVATHFSGHIETVIKKLQNQVLLFKFLRSLLDPREGIHVNQELLQISPCITEQFIELLCQFNPTQVIETLQVLECYRLEETIQITQKYQLHEVTAYLLEKKGDIHGAFLIMLERLQSKLQEVTHQGENTKEDPSLKDVEDTMVETIALCQRNSHNLNQQQREALWFPLLEAMMAPQKLSSSAIPHLHSEALKSLTMQVLNSMAAFIALPSILQRILQDPVYGKGKLGEIQGLILGMLDTFNYEQTLLETTTSLLNQDLHWSLCNLRASVTRGLNPKQDYCSICLQQYKRRQEMADEIIVFSCGHLYHSFCLQNKECTVEFEGQTRWTCYKCSSSNKVGKLSENSSEIKKGRITPSQVKMSPSYHQSKGDPTAKKGTSEPVLDPQQIQAFDQLCRLYRGSSRLALLTELSQNRSSESYRPFSGSQSAPAFNSIFQNENFQLQLIPPPVTED.

Residues Ser-26, Ser-32, and Ser-127 each carry the phosphoserine modification. One copy of the WD repeat lies at 195–236 (VGGQYGAISALSINNDCSRLLCGFAKGQITMWDLASGKLLRS). An RING-type; atypical zinc finger spans residues 1258 to 1310 (CSICLQQYKRRQEMADEIIVFSCGHLYHSFCLQNKECTVEFEGQTRWTCYKCS). The tract at residues 1330 to 1356 (ITPSQVKMSPSYHQSKGDPTAKKGTSE) is disordered. Positions 1331–1343 (TPSQVKMSPSYHQ) are enriched in polar residues. Residues 1344–1354 (SKGDPTAKKGT) show a composition bias toward basic and acidic residues.

The protein belongs to the VPS8 family. As to quaternary structure, interacts with RAB5C. Interacts with TGFBRAP1. Component of the putative class C core vacuole/endosome tethering (CORVET) complex; the core of which composed of the class C Vps proteins VPS11, VPS16, VPS18 and VPS33A, is associated with VPS8 and TGFBRAP1.

Its subcellular location is the early endosome. In terms of biological role, plays a role in vesicle-mediated protein trafficking of the endocytic membrane transport pathway. Believed to act as a component of the putative CORVET endosomal tethering complexes which is proposed to be involved in the Rab5-to-Rab7 endosome conversion probably implicating MON1A/B, and via binding SNAREs and SNARE complexes to mediate tethering and docking events during SNARE-mediated membrane fusion. The CORVET complex is proposed to function as a Rab5 effector to mediate early endosome fusion probably in specific endosome subpopulations. Functions predominantly in APPL1-containing endosomes. The protein is Vacuolar protein sorting-associated protein 8 homolog (VPS8) of Homo sapiens (Human).